A 787-amino-acid chain; its full sequence is Lon protease (787 aa).

Residues 12 to 210 form the Lon N-terminal domain; that stretch reads LPLIPLRGLA…LIYSILLEEI (199 aa). 362–369 lines the ATP pocket; it reads GPPGTGKT. Residues 599–780 enclose the Lon proteolytic domain; sequence NPQIGLVNGL…DEVLEQALLK (182 aa). Active-site residues include Ser686 and Lys729.

This sequence belongs to the peptidase S16 family. As to quaternary structure, homohexamer. Organized in a ring with a central cavity.

The protein localises to the cytoplasm. It catalyses the reaction Hydrolysis of proteins in presence of ATP.. ATP-dependent serine protease that mediates the selective degradation of mutant and abnormal proteins as well as certain short-lived regulatory proteins. Required for cellular homeostasis and for survival from DNA damage and developmental changes induced by stress. Degrades polypeptides processively to yield small peptide fragments that are 5 to 10 amino acids long. Binds to DNA in a double-stranded, site-specific manner. In Clostridioides difficile (strain 630) (Peptoclostridium difficile), this protein is Lon protease.